The following is a 245-amino-acid chain: MTTPILNSSVPGNIQKKSLEGTHIAISGLIGAGKTTLAVALGKVLNLPTYFEEVIDNLYLQDFYKDPKKYGFQLQIYLLNSRFQQQQQIIWQARGGVQDRTIYEDSVFAKMLNESGLLDDRDYNTYCKLFQNLSNFMRRPDLIIHLDVSPEKSLERIKLRNRDCEKDVSLEYLQNLYNAYHEFLQDISRYIPVIRINWSEFVDPEQLAQMIKAEYESMRFMNQINPPTFGNGPTTNKIISTPKDL.

Residue Gly-28 to Thr-36 participates in ATP binding. 3 residues coordinate substrate: Glu-52, Tyr-64, and Gln-75. Residue Asp-99 is the Proton acceptor of the active site. Substrate contacts are provided by Arg-100, Asp-105, and Glu-165.

Belongs to the DCK/DGK family.

The enzyme catalyses 2'-deoxyadenosine + ATP = dAMP + ADP + H(+). In terms of biological role, specific kinase that phosphorylates deoxyadenosine but not any other deoxyribonucleoside, as part of the deoxyribonucleotide salvage pathway. The protein is Deoxyadenosine kinase (dak) of Dictyostelium discoideum (Social amoeba).